The following is a 585-amino-acid chain: Glutamate decarboxylase 2 (585 aa).

The disordered stretch occupies residues 1–25; the sequence is MASPGSGFWSFGSEDGSGDPENPST. Phosphoserine occurs at positions 3, 6, 10, and 13. 2 S-palmitoyl cysteine lipidation sites follow: Cys30 and Cys45. 181 to 183 lines the substrate pocket; sequence QLS. Residue Lys396 is modified to N6-(pyridoxal phosphate)lysine. Position 558 (Arg558) interacts with substrate.

It belongs to the group II decarboxylase family. As to quaternary structure, homodimer. It depends on pyridoxal 5'-phosphate as a cofactor. Phosphorylated; which does not affect kinetic parameters or subcellular location. Post-translationally, palmitoylated; which is required for presynaptic clustering.

The protein localises to the cytoplasm. The protein resides in the cytosol. It is found in the cytoplasmic vesicle. Its subcellular location is the presynaptic cell membrane. It localises to the golgi apparatus membrane. It carries out the reaction L-glutamate + H(+) = 4-aminobutanoate + CO2. Its function is as follows. Catalyzes the production of GABA. In Canis lupus familiaris (Dog), this protein is Glutamate decarboxylase 2 (GAD2).